A 2476-amino-acid chain; its full sequence is Non-reducing polyketide synthase ausA (2476 aa).

The segment at 14 to 253 is N-terminal acylcarrier protein transacylase domain (SAT); sequence VLFGPKYPEV…HHSNHTQAVE (240 aa). The region spanning 379 to 795 is the Ketosynthase family 3 (KS3) domain; it reads AVPIAVTGMA…GSNAAIVLRE (417 aa). Active-site for beta-ketoacyl synthase activity residues include Cys544, His679, and His718. The tract at residues 906 to 1210 is malonyl-CoA:ACP transacylase (MAT) domain; the sequence is ICFGGQTGDT…LPTDLSGAQA (305 aa). Ser993 (for acyl/malonyl transferase activity) is an active-site residue. The tract at residues 1277 to 1405 is N-terminal hotdog fold; the sequence is QEASLVRLLR…GRVSLQAAGS (129 aa). Positions 1277–1584 constitute a PKS/mFAS DH domain; the sequence is QEASLVRLLR…FTGVSIQSLK (308 aa). Residues 1280–1583 are product template (PT) domain; the sequence is SLVRLLRQDG…TFTGVSIQSL (304 aa). His1310 functions as the Proton acceptor; for dehydratase activity in the catalytic mechanism. Residues 1433-1584 are C-terminal hotdog fold; the sequence is SSSGLKRSTV…FTGVSIQSLK (152 aa). Asp1491 functions as the Proton donor; for dehydratase activity in the catalytic mechanism. The region spanning 1626–1700 is the Carrier domain; it reads DGDLLAVQTM…GLVQRIFPGH (75 aa). Ser1660 carries the post-translational modification O-(pantetheine 4'-phosphoryl)serine. The tract at residues 1862–2095 is methyltransferase (CMeT) domain; it reads QHASEHKLLH…GFNWVDWTDN (234 aa). Positions 2128–2476 are thioesterase (TE) domain; that stretch reads NTVQEQTVLY…YEFLRRHVGL (349 aa). Catalysis depends on for thioesterase activity residues Ser2251, Asp2413, and His2445.

It catalyses the reaction 3 malonyl-CoA + acetyl-CoA + 2 S-adenosyl-L-methionine = 3,5-dimethylorsellinate + 2 S-adenosyl-L-homocysteine + 3 CO2 + 4 CoA. The protein operates within secondary metabolite biosynthesis; terpenoid biosynthesis. Its function is as follows. Non-reducing polyketide synthase; part of the gene cluster A that mediates the biosynthesis of austinol and dehydroaustinol, two fungal meroterpenoids. The first step of the pathway is the synthesis of 3,5-dimethylorsellinic acid by the polyketide synthase ausA. 3,5-dimethylorsellinic acid is then prenylated by the polyprenyl transferase ausN. Further epoxidation by the FAD-dependent monooxygenase ausM and cyclization by the probable terpene cyclase ausL lead to the formation of protoaustinoid A. Protoaustinoid A is then oxidized to spiro-lactone preaustinoid A3 by the combined action of the FAD-binding monooxygenases ausB and ausC, and the dioxygenase ausE. Acid-catalyzed keto-rearrangement and ring contraction of the tetraketide portion of preaustinoid A3 by ausJ lead to the formation of preaustinoid A4. The aldo-keto reductase ausK, with the help of ausH, is involved in the next step by transforming preaustinoid A4 into isoaustinone which is in turn hydroxylated by the P450 monooxygenase ausI to form austinolide. Finally, the cytochrome P450 monooxygenase ausG modifies austinolide to austinol. Austinol can be further modified to dehydroaustinol which forms a diffusible complex with diorcinol that initiates conidiation. Due to genetic rearrangements of the clusters and the subsequent loss of some enzymes, the end products of the Emericella nidulans austinoid biosynthesis clusters are austinol and dehydroaustinol, even if additional enzymes, such as the O-acetyltransferase ausQ and the cytochrome P450 monooxygenase ausR are still functional. The protein is Non-reducing polyketide synthase ausA of Emericella nidulans (strain FGSC A4 / ATCC 38163 / CBS 112.46 / NRRL 194 / M139) (Aspergillus nidulans).